The following is a 62-amino-acid chain: MLCLPVFIILLLLVSPAATMPVDLEILKAPTKESRKDFEMRIELLRSKRQCCRPANMSCCQG.

A signal peptide spans 1–19; that stretch reads MLCLPVFIILLLLVSPAAT. A propeptide spanning residues 20 to 47 is cleaved from the precursor; it reads MPVDLEILKAPTKESRKDFEMRIELLRS. Gln50 is modified (pyrrolidone carboxylic acid). At Gln61 the chain carries Glutamine amide.

This sequence belongs to the conotoxin T superfamily. In terms of processing, contains 2 disulfide bonds that can be either 'C1-C3, C2-C4' or 'C1-C4, C2-C3', since these disulfide connectivities have been observed for conotoxins with cysteine framework V (for examples, see AC P0DQQ7 and AC P81755). In terms of tissue distribution, expressed by the venom duct.

It is found in the secreted. This Conus litteratus (Lettered cone) protein is Conotoxin Lt5.8.